Here is a 291-residue protein sequence, read N- to C-terminus: MDVLTDQDVQKFRDEGYLVLEGLLSPEECDALRRRMSEIIESMDVPEHCRTQFSTDHDEQLKTQGNADYFITSGDKIRFFFEKGVFDDKGEFVVPKEQSLNKIGHALHAYEPLFKRVTHSPKVQNICKKLELINPVILQSMYIFKQPGIGGEVTPHQDATFLYTQPLGRVMGVWVALEDAMQENGCLWFIPGSHNDGITRRMVRTPKGTFPLTDFIGREKDYDDKLFVPAPVKKGGAVLIHGEVVHRSAANTSDASRHVYTFHIMESENTVWSPENWLQATEELPFPSLYT.

Residues Lys-102, Met-141, 156 to 158 (HQD), and Trp-174 each bind 2-oxoglutarate. Fe cation contacts are provided by His-156 and Asp-158. Position 246 (His-246) interacts with Fe cation. 2 residues coordinate 2-oxoglutarate: Ser-248 and Arg-257.

Belongs to the PhyH family. PHYHD1 subfamily. Fe cation serves as cofactor.

Its function is as follows. 2-oxoglutarate(2OG)-dependent dioxygenase that catalyzes the conversion of 2-oxoglutarate to succinate and CO(2) in an iron-dependent manner. However, does not couple 2OG turnover to the hydroxylation of acyl-coenzyme A derivatives, implying that it is not directly involved in phytanoyl coenzyme-A metabolism. Does not show detectable activity towards fatty acid CoA thioesters. In Danio rerio (Zebrafish), this protein is Phytanoyl-CoA dioxygenase domain-containing protein 1 (phyhd1).